Consider the following 290-residue polypeptide: 33 kDa chaperonin (290 aa).

Cystine bridges form between Cys235/Cys237 and Cys268/Cys271.

This sequence belongs to the HSP33 family. Post-translationally, under oxidizing conditions two disulfide bonds are formed involving the reactive cysteines. Under reducing conditions zinc is bound to the reactive cysteines and the protein is inactive.

The protein resides in the cytoplasm. Redox regulated molecular chaperone. Protects both thermally unfolding and oxidatively damaged proteins from irreversible aggregation. Plays an important role in the bacterial defense system toward oxidative stress. The chain is 33 kDa chaperonin from Streptococcus pyogenes serotype M4 (strain MGAS10750).